The chain runs to 497 residues: Probable zinc metalloprotease TRV_03476 (497 aa).

Positions Met-1 to Ala-24 are cleaved as a signal peptide. Asn-100 and Asn-121 each carry an N-linked (GlcNAc...) asparagine glycan. Zn(2+) contacts are provided by His-171, Asp-191, and Glu-227. Asn-242 carries N-linked (GlcNAc...) asparagine glycosylation. Asp-254 is a binding site for Zn(2+). A Fibronectin type-III domain is found at Met-411–Pro-497. An N-linked (GlcNAc...) asparagine glycan is attached at Asn-424.

Belongs to the peptidase M28 family. M28B subfamily. It depends on Zn(2+) as a cofactor.

The protein localises to the secreted. This chain is Probable zinc metalloprotease TRV_03476, found in Trichophyton verrucosum (strain HKI 0517).